The chain runs to 1512 residues: Lysophospholipase NTE1 (1512 aa).

The Cytoplasmic segment spans residues 1-48 (MAAPDAMTSLVKSSVALLSSAHESLPTSLAAMKTAETAPSSTFGILGR). Residues 49-69 (VILSILSVLPTLLFWVSYTLP) traverse the membrane as a helical segment. Over 70–83 (TWLFTLFSMSLTFT) the chain is Lumenal. Residues 84-104 (MNFTTLMLVLVFVVSTISYFV) traverse the membrane as a helical segment. Over 105–1512 (RYRYLTMYAR…RTMAPRRASI (1408 aa)) the chain is Cytoplasmic. 4 disordered regions span residues 204–230 (NREE…QAHR), 262–362 (RHDE…AHPD), 534–556 (TQMS…QHDV), and 740–770 (TEDD…KRSR). Positions 208–217 (SDSDEDDGEL) are enriched in acidic residues. Residues 268-291 (GPSSSTPMSPQHRPSMTRNSSFNM) are compositionally biased toward polar residues. The segment covering 343 to 358 (HSKQRRSPSRSTKPKS) has biased composition (basic residues). Over residues 537–549 (SRGTGRSGRSSFS) the composition is skewed to low complexity. Residues 669–793 (LSAS…SNRS) and 830–950 (RLTT…IASR) contribute to the a nucleoside 3',5'-cyclic phosphate site. A compositionally biased stretch (polar residues) spans 751 to 761 (PTATNTSLRNG). A PNPLA domain is found at 1209–1373 (LVLGGGGARG…IDNLTVAHMK (165 aa)). The GXGXXG signature appears at 1213–1218 (GGGARG). Positions 1240–1244 (GTSIG) match the GXSXG motif. The active-site Nucleophile is the S1242. Catalysis depends on D1360, which acts as the Proton acceptor. The DGA/G motif lies at 1360 to 1362 (DGG).

Belongs to the NTE family.

It is found in the endoplasmic reticulum membrane. The catalysed reaction is a 1-acyl-sn-glycero-3-phosphocholine + H2O = sn-glycerol 3-phosphocholine + a fatty acid + H(+). With respect to regulation, inhibited by organophosphorus esters. In terms of biological role, intracellular phospholipase B that catalyzes the double deacylation of phosphatidylcholine (PC) to glycerophosphocholine (GroPCho). Plays an important role in membrane lipid homeostasis. Responsible for the rapid PC turnover in response to inositol, elevated temperatures, or when choline is present in the growth medium. In Phaeosphaeria nodorum (strain SN15 / ATCC MYA-4574 / FGSC 10173) (Glume blotch fungus), this protein is Lysophospholipase NTE1 (NTE1).